Consider the following 585-residue polypeptide: MDRNSVTGLALIALIMIVWLQFMSPEKKPLQQVTDAGKARTEQVAAEINSDMQPAAVPATEDSFGMFAPAASGTERLTVIDNDLFHAVVSSKGATLKSLVLKKHLDGNLKPFDLVSDAKNGALSMLFLTREGRRIDTRDLYFAGSSLDTLHTIKGKETYALSYRLALSPRQSIEVSYTFTGDSYRIGYDVKLTGLSGSLAGNEYQVQWDGGLPYTEKNRDDEARSAQASAYLGGSLVKLDAEKDGRSYREEQSGDARWVAVRNKYFIAALIPEDRTAGFYLDGQKERGNAYENYLASLKMEVPASEEVVDSRFSLYLGPLDYNTVKAQHADIEKIMDFGWDWLTRPFAEFVILPAFTWMNRFVSNYGLIIIIFAFLIKLVTYPLSTASTKSMKKMAALQPMLKELQDKYKDNPAKLQSELGRIYKEAGVNPLGGCLPVVLQMPLLFAMFYVFRSSIQLRQHGFLWVKDLSVPDSILDFGFTIPMYGSHIALLPILMAVTVFLQQKITPTAQSNDQMKIMLYMFPAMMLLFFNNMPSGLALYYLMFNVFSVAQQFYINSTSSAADLPQVSISAPSRPKKKKSGSGK.

6 helical membrane passes run 5–25, 338–358, 362–382, 432–452, 482–502, and 518–538; these read SVTGLALIALIMIVWLQFMSP, FGWDWLTRPFAEFVILPAFTW, FVSNYGLIIIIFAFLIKLVTY, LGGCLPVVLQMPLLFAMFYVF, IPMYGSHIALLPILMAVTVFL, and IMLYMFPAMMLLFFNNMPSGL.

Belongs to the OXA1/ALB3/YidC family. Type 1 subfamily. Interacts with the Sec translocase complex via SecD. Specifically interacts with transmembrane segments of nascent integral membrane proteins during membrane integration.

It is found in the cell inner membrane. In terms of biological role, required for the insertion and/or proper folding and/or complex formation of integral membrane proteins into the membrane. Involved in integration of membrane proteins that insert both dependently and independently of the Sec translocase complex, as well as at least some lipoproteins. Aids folding of multispanning membrane proteins. The sequence is that of Membrane protein insertase YidC from Chlorobium luteolum (strain DSM 273 / BCRC 81028 / 2530) (Pelodictyon luteolum).